The primary structure comprises 68 residues: Purkinje cell protein 4-like protein 1 (68 aa).

Over residues 1–16 (MSELNTKTPPAANQAS) the composition is skewed to polar residues. Positions 1–42 (MSELNTKTPPAANQASDPEEKGKPGSIKKAEEEEEIDIDLTA) are disordered. Thr8 bears the Phosphothreonine mark. The span at 18–31 (PEEKGKPGSIKKAE) shows a compositional bias: basic and acidic residues. One can recognise an IQ domain in the interval 45–68 (TEKAALAIQGKFRRFQKRKKDSSS).

Belongs to the PCP4 family. In terms of tissue distribution, expressed in laminar and nuclear structures of the CNS.

In Mus musculus (Mouse), this protein is Purkinje cell protein 4-like protein 1 (Pcp4l1).